The following is a 174-amino-acid chain: Dehydratase AgnL8 (174 aa).

Positions 24, 44, and 47 each coordinate substrate. Residues His79 and His104 contribute to the active site.

This sequence belongs to the scytalone dehydratase family. As to quaternary structure, homotrimer. Each subunit contains an active site, located in the central part of the hydrophobic core of the monomer, which functions independently.

It participates in secondary metabolite biosynthesis. Functionally, dehydratase; part of the gene cluster that mediates the biosynthesis of agnestins, dihydroxy-xanthone metabolites. The pathway begins with the assembly and cyclization of atrochrysone thioester by the non-reducing polyketide synthase Agnpks1. The atrochrysone carboxyl ACP thioesterase AgnL7 then breaks the thioester bond and releases the atrochrysone carboxylic acid as the first enzyme-free intermediate. The decarboxylase AgnL1 then catalyzes the concerted decarboxylation-elimination required to convert atochrysone carboxylic acid into emodin anthrone, which is further oxidized to emodin by the anthrone oxygenase AgnL2. Emodin then undergoes reduction catalyzed by the oxidoreductase AgnL4 to yield the dihydroquinone tautomer which is the substrate for reduction by the short chain dehydrogenase AgnL6 reduction to produce hydroxyketone, followed by AgnL8 dehydration and likely spontaneous autoxidation to chrysophanol. Baeyer-Villiger oxidation by the oxidase AgnL3 leads to monodictyphenone via cleavage of the C-10/C-10a bond of chrysophanol. Alternative cleavage at the C-4a/C-10 bond of chrysophanol also leads to the formation some cephalone F. Further conversion to agnestins A and B, requires reduction to dihydro-monodictyphenone, oxidation to agnestin C probably via an epoxide, and rearrangement to either agnestin A or agnestin B directly, although agnestin A or agnestin B can also interconvert. Within the cluster, AgnR1 is the only unassigned oxidoreductase present which could be involved in this conversion. However, AgnR1 seems not to be involved in this step, and thus genes involved in the proposed oxidation/reduction may be located elsewhere on the genome. Further agnestin A derivatives are probably formed by spontaneous decarboxylations, dehydrations and methanolysis reactions. The polypeptide is Dehydratase AgnL8 (Paecilomyces divaricatus (Penicillium divaricatum)).